The chain runs to 1122 residues: Receptor-type guanylate cyclase gcy-5 (1122 aa).

An N-terminal signal peptide occupies residues 1-19; that stretch reads MRLLYFSMVLLWVLGASEC. The Extracellular segment spans residues 20–486; the sequence is QVIPSSRRTL…CPVQFWDQYG (467 aa). 7 N-linked (GlcNAc...) asparagine glycosylation sites follow: Asn252, Asn299, Asn344, Asn350, Asn378, Asn434, and Asn439. The chain crosses the membrane as a helical span at residues 487–507; sequence VLIFVASIVLIFLICIMLMCF. Topologically, residues 508 to 1122 are cytoplasmic; it reads GFMIRGRRAE…KSKMDTLKVV (615 aa). The disordered stretch occupies residues 536–562; that stretch reads QKEKRKPNSRRSLQSGPSTITGESKMT. Residues 542–830 enclose the Protein kinase domain; the sequence is PNSRRSLQSG…NTNLMDHVFN (289 aa). Residues 545 to 559 show a composition bias toward polar residues; that stretch reads RRSLQSGPSTITGES. The 131-residue stretch at 888 to 1018 folds into the Guanylate cyclase domain; the sequence is TVLFSDVVKF…DTVNTASRME (131 aa). The disordered stretch occupies residues 1071-1122; the sequence is SDTKSLSTRTTPPITDENWPPQMKEDLKKRAVTPYPERQRSGKSKMDTLKVV. Positions 1074 to 1083 are enriched in polar residues; the sequence is KSLSTRTTPP. Positions 1107–1122 are enriched in basic and acidic residues; the sequence is ERQRSGKSKMDTLKVV.

This sequence belongs to the adenylyl cyclase class-4/guanylyl cyclase family. Expressed in both ASEL and ASER neurons during early embryonic stages and becomes specifically expressed in ASER neuron in early larval stage.

The protein resides in the cell membrane. It carries out the reaction GTP = 3',5'-cyclic GMP + diphosphate. In terms of biological role, guanylate cyclase involved in the production of the second messenger cGMP. Unlike other guanylate cyclases expressed in ASE neurons, may not play a role in chemotaxis responses to salt ions mediated by ASE sensory neurons. This is Receptor-type guanylate cyclase gcy-5 from Caenorhabditis elegans.